Reading from the N-terminus, the 552-residue chain is Urocanate hydratase (552 aa).

NAD(+) contacts are provided by residues 49 to 50 (GG), glutamine 127, 173 to 175 (GMG), aspartate 193, 239 to 240 (NA), 260 to 264 (QTSAH), 270 to 271 (YI), and tyrosine 319. The active site involves cysteine 407. Glycine 489 is a binding site for NAD(+).

This sequence belongs to the urocanase family. NAD(+) is required as a cofactor.

Its subcellular location is the cytoplasm. It carries out the reaction 4-imidazolone-5-propanoate = trans-urocanate + H2O. It participates in amino-acid degradation; L-histidine degradation into L-glutamate; N-formimidoyl-L-glutamate from L-histidine: step 2/3. Functionally, catalyzes the conversion of urocanate to 4-imidazolone-5-propionate. This is Urocanate hydratase from Bacillus cereus (strain ATCC 14579 / DSM 31 / CCUG 7414 / JCM 2152 / NBRC 15305 / NCIMB 9373 / NCTC 2599 / NRRL B-3711).